We begin with the raw amino-acid sequence, 709 residues long: ATP-binding cassette sub-family F member 3 (709 aa).

At Ala2 the chain carries N-acetylalanine. The residue at position 83 (Ser83) is a Phosphoserine. Residues 129–143 show a composition bias toward basic and acidic residues; that stretch reads RLKAKQEKRSEKETL. Residues 129 to 171 form a disordered region; the sequence is RLKAKQEKRSEKETLKTSNPLVLEEASASQAGSRKESRLESSG. Residues Ser155, Ser157, and Ser161 each carry the phosphoserine modification. Residues 161 to 171 show a composition bias toward basic and acidic residues; the sequence is SRKESRLESSG. 2 consecutive ABC transporter domains span residues 178–424 and 492–707; these read VRIE…LNQQ and LQLD…RREG. Position 210-217 (210-217) interacts with ATP; sequence GRNGLGKT. Ser283 is modified (phosphoserine). Residue 525–532 participates in ATP binding; it reads GENGAGKS.

The protein belongs to the ABC transporter superfamily. ABCF family. EF3 subfamily.

Functionally, displays an antiviral effect against flaviviruses such as west Nile virus (WNV) in the presence of OAS1B. The polypeptide is ATP-binding cassette sub-family F member 3 (Abcf3) (Mus musculus (Mouse)).